Consider the following 233-residue polypeptide: Ras-related protein Rab-20 (233 aa).

Glycine 17, lysine 18, threonine 19, aspartate 32, and threonine 36 together coordinate GTP. Threonine 19 is a binding site for Mg(2+). Short sequence motifs (switch) lie at residues 28–41 and 55–72; these read RRFP…GGAF and DTAG…YCRG. The Mg(2+) site is built by threonine 36 and aspartate 55. 4 residues coordinate GTP: glycine 58, asparagine 113, lysine 114, and aspartate 116. Residues 119–130 are compositionally biased toward basic and acidic residues; that stretch reads SERDTEGGEKEG. A disordered region spans residues 119-138; the sequence is SERDTEGGEKEGPASGKVGS. Residues alanine 183 and lysine 184 each coordinate GTP. Residues cysteine 231 and cysteine 232 are each lipidated (S-geranylgeranyl cysteine).

This sequence belongs to the small GTPase superfamily. Rab family. The cofactor is Mg(2+). Present in a variety of tissues, but not in brain.

The protein localises to the cytoplasmic vesicle. It is found in the phagosome. The protein resides in the phagosome membrane. Its subcellular location is the golgi apparatus. It catalyses the reaction GTP + H2O = GDP + phosphate + H(+). Regulated by guanine nucleotide exchange factors (GEFs) which promote the exchange of bound GDP for free GTP. Regulated by GTPase activating proteins (GAPs) which increase the GTP hydrolysis activity. Inhibited by GDP dissociation inhibitors (GDIs). Functionally, plays a role in apical endocytosis/recycling. Plays a role in the maturation and acidification of phagosomes that engulf pathogens, such as S.aureus and Mycobacterium. Plays a role in the fusion of phagosomes with lysosomes. This chain is Ras-related protein Rab-20, found in Mus musculus (Mouse).